We begin with the raw amino-acid sequence, 571 residues long: Glutamate--tRNA ligase (571 aa).

The 'HIGH' region signature appears at 106-116; that stretch reads PNPDGAFHLGN.

The protein belongs to the class-I aminoacyl-tRNA synthetase family. Glutamate--tRNA ligase type 2 subfamily.

The protein localises to the cytoplasm. It carries out the reaction tRNA(Glu) + L-glutamate + ATP = L-glutamyl-tRNA(Glu) + AMP + diphosphate. Its function is as follows. Catalyzes the attachment of glutamate to tRNA(Glu) in a two-step reaction: glutamate is first activated by ATP to form Glu-AMP and then transferred to the acceptor end of tRNA(Glu). In Pyrococcus abyssi (strain GE5 / Orsay), this protein is Glutamate--tRNA ligase.